A 583-amino-acid chain; its full sequence is Leucine aminopeptidase 2, chloroplastic (583 aa).

Residues 1–70 constitute a chloroplast transit peptide; it reads MAVTLVTSFA…ISHATLGLTQ (70 aa). Positions 351 and 356 each coordinate Mn(2+). Lys-363 is a catalytic residue. Mn(2+) is bound by residues Asp-376, Asp-436, and Glu-438. The active site involves Arg-440.

This sequence belongs to the peptidase M17 family. As to quaternary structure, homohexamer (dimer of homotrimers). It depends on Mn(2+) as a cofactor.

It is found in the plastid. Its subcellular location is the chloroplast. The catalysed reaction is Release of an N-terminal amino acid, Xaa-|-Yaa-, in which Xaa is preferably Leu, but may be other amino acids including Pro although not Arg or Lys, and Yaa may be Pro. Amino acid amides and methyl esters are also readily hydrolyzed, but rates on arylamides are exceedingly low.. The enzyme catalyses Release of N-terminal proline from a peptide.. Presumably involved in the processing and regular turnover of intracellular proteins. Catalyzes the removal of unsubstituted N-terminal amino acids from various peptides. Possesses leucine aminopeptidase activity against the model substrate leucine-amido methyl coumarin. Does not seem to possess Cys-Gly dipeptidase activity. Its function is as follows. Functions as a molecular chaperone to protect proteins from heat-induced damage. This Arabidopsis thaliana (Mouse-ear cress) protein is Leucine aminopeptidase 2, chloroplastic.